A 407-amino-acid chain; its full sequence is MTVRGDVLAPDPASPTTAAASPSVSVIPEGSPTAMEQPVFLMTTAAQAISGFFVWTALLITCHQIYMHLRCYSCPNEQRYIVRILFIVPIYAFDSWLSLLFFTNDQYYVYFGTVRDCYEALVIYNFLSLCYEYLGGESSIMSEIRGKPIESSCMYGTCCLWGKTYSIGFLRFCKQATLQFCVVKPLMAVSTVVLQAFGKYRDGDFDVTSGYLYVTIIYNISVSLALYALFLFYFATRELLSPYSPVLKFFMVKSVIFLSFWQGMLLAILEKCGAIPKIHSARVSVGEGTVAAGYQDFIICVEMFFAALALRHAFTYKVYADKRLDAQGRCAPMKSISSSLKETMNPHDIVQDAIHNFSPAYQQYTQQSTLEPGPTWRGGAHGLSRSHSLSGARDNEKTLLLSSDDEF.

Positions 1–25 (MTVRGDVLAPDPASPTTAAASPSVS) are disordered. The segment covering 9–25 (APDPASPTTAAASPSVS) has biased composition (low complexity). Helical transmembrane passes span 40–60 (FLMTTAAQAISGFFVWTALLI), 84–104 (ILFIVPIYAFDSWLSLLFFTN), 121–141 (LVIYNFLSLCYEYLGGESSIM), 178–198 (LQFCVVKPLMAVSTVVLQAFG), 214–234 (VTIIYNISVSLALYALFLFYF), 249–269 (FFMVKSVIFLSFWQGMLLAIL), and 290–310 (VAAGYQDFIICVEMFFAALAL). The disordered stretch occupies residues 369–395 (TLEPGPTWRGGAHGLSRSHSLSGARDN). A phosphoserine mark is found at Ser388, Ser402, and Ser403.

The protein belongs to the TMEM184 family.

It is found in the membrane. May activate the MAP kinase signaling pathway. This is Transmembrane protein 184B (TMEM184B) from Homo sapiens (Human).